Here is a 236-residue protein sequence, read N- to C-terminus: tRNA1(Val) (adenine(37)-N6)-methyltransferase (236 aa).

This sequence belongs to the methyltransferase superfamily. tRNA (adenine-N(6)-)-methyltransferase family.

The protein localises to the cytoplasm. It carries out the reaction adenosine(37) in tRNA1(Val) + S-adenosyl-L-methionine = N(6)-methyladenosine(37) in tRNA1(Val) + S-adenosyl-L-homocysteine + H(+). In terms of biological role, specifically methylates the adenine in position 37 of tRNA(1)(Val) (anticodon cmo5UAC). The polypeptide is tRNA1(Val) (adenine(37)-N6)-methyltransferase (Actinobacillus succinogenes (strain ATCC 55618 / DSM 22257 / CCUG 43843 / 130Z)).